We begin with the raw amino-acid sequence, 56 residues long: Ovomucoid (56 aa).

Positions V6 to C56 constitute a Kazal-like domain. 3 disulfide bridges follow: C8–C38, C16–C35, and C24–C56. N45 carries an N-linked (GlcNAc...) asparagine glycan.

It is found in the secreted. This is Ovomucoid from Meleagris ocellata (Ocellated turkey).